The primary structure comprises 341 residues: N-acetyl-gamma-glutamyl-phosphate reductase (341 aa).

Residue C147 is part of the active site.

Belongs to the NAGSA dehydrogenase family. Type 1 subfamily.

It localises to the cytoplasm. The enzyme catalyses N-acetyl-L-glutamate 5-semialdehyde + phosphate + NADP(+) = N-acetyl-L-glutamyl 5-phosphate + NADPH + H(+). Its pathway is amino-acid biosynthesis; L-arginine biosynthesis; N(2)-acetyl-L-ornithine from L-glutamate: step 3/4. Catalyzes the NADPH-dependent reduction of N-acetyl-5-glutamyl phosphate to yield N-acetyl-L-glutamate 5-semialdehyde. The polypeptide is N-acetyl-gamma-glutamyl-phosphate reductase (Dehalococcoides mccartyi (strain CBDB1)).